Consider the following 164-residue polypeptide: Thiol peroxidase (164 aa).

Residues 16 to 162 form the Thioredoxin domain; sequence LQVGEIAHDF…YDAAIEAVKV (147 aa). Cys58 acts as the Cysteine sulfenic acid (-SOH) intermediate in catalysis. Cys58 and Cys92 are disulfide-bonded.

Belongs to the peroxiredoxin family. Tpx subfamily. As to quaternary structure, homodimer.

The enzyme catalyses a hydroperoxide + [thioredoxin]-dithiol = an alcohol + [thioredoxin]-disulfide + H2O. Thiol-specific peroxidase that catalyzes the reduction of hydrogen peroxide and organic hydroperoxides to water and alcohols, respectively. Plays a role in cell protection against oxidative stress by detoxifying peroxides. The polypeptide is Thiol peroxidase (Streptococcus parasanguinis).